Consider the following 247-residue polypeptide: Osmotin-like protein NP24-I (247 aa).

A signal peptide spans 1–21 (MGYLTSSFVLFFLLCVTYTYA). 8 disulfides stabilise this stretch: Cys-30–Cys-225, Cys-72–Cys-82, Cys-87–Cys-93, Cys-141–Cys-213, Cys-146–Cys-196, Cys-154–Cys-164, Cys-168–Cys-177, and Cys-178–Cys-183.

It belongs to the thaumatin family. In terms of tissue distribution, highest levels of both isoforms found in the outer pericarp, with smaller amounts in the inner pericarp.

Its subcellular location is the cytoplasm. It localises to the vacuole. The enzyme catalyses Endohydrolysis of (1-&gt;3)- or (1-&gt;4)-linkages in beta-D-glucans when the glucose residue whose reducing group is involved in the linkage to be hydrolyzed is itself substituted at C-3.. In terms of biological role, has antifungal activity against P.betae and F.dahliae. May be involved in disease resistance in tomatoes and/or have a possible role in fruit development and ripening. Binds to beta-glucans and exhibits beta-1,3-D-glucanase activity. The chain is Osmotin-like protein NP24-I from Solanum lycopersicum (Tomato).